We begin with the raw amino-acid sequence, 107 residues long: Nucleoid-associated protein Mlg_1509 (107 aa).

Belongs to the YbaB/EbfC family. Homodimer.

Its subcellular location is the cytoplasm. The protein localises to the nucleoid. Its function is as follows. Binds to DNA and alters its conformation. May be involved in regulation of gene expression, nucleoid organization and DNA protection. In Alkalilimnicola ehrlichii (strain ATCC BAA-1101 / DSM 17681 / MLHE-1), this protein is Nucleoid-associated protein Mlg_1509.